The chain runs to 435 residues: Maltodextrin transport system permease protein MalC (435 aa).

10 helical membrane-spanning segments follow: residues 34-54, 73-93, 130-150, 199-219, 230-250, 263-283, 294-314, 338-358, 371-391, and 404-424; these read GFIF…LATP, FMLI…LFYF, YLLI…PVIV, IIWA…TAII, IFGV…ILTF, TQVL…LIPW, LIMM…LGIL, NITF…QYTF, GGGP…ISWI, and MAAA…MIAF. Positions 195-423 constitute an ABC transmembrane type-1 domain; the sequence is LSWTIIWALA…IIVISISMIA (229 aa).

The protein belongs to the binding-protein-dependent transport system permease family. MalFG subfamily.

The protein localises to the cell membrane. In terms of biological role, part of the binding-protein-dependent transport system for maltodextrin; probably responsible for the translocation of the substrate across the membrane. This chain is Maltodextrin transport system permease protein MalC (malC), found in Streptococcus pneumoniae serotype 4 (strain ATCC BAA-334 / TIGR4).